A 375-amino-acid chain; its full sequence is PqqA peptide cyclase (375 aa).

Residues 18 to 235 (ILPPMAMLAE…EAREKYQGIL (218 aa)) enclose the Radical SAM core domain. Positions 32, 36, and 39 each coordinate [4Fe-4S] cluster.

This sequence belongs to the radical SAM superfamily. PqqE family. As to quaternary structure, interacts with PqqD. The interaction is necessary for activity of PqqE. It depends on [4Fe-4S] cluster as a cofactor.

It catalyses the reaction [PQQ precursor protein] + S-adenosyl-L-methionine = E-Y cross-linked-[PQQ precursor protein] + 5'-deoxyadenosine + L-methionine + H(+). Its pathway is cofactor biosynthesis; pyrroloquinoline quinone biosynthesis. Its function is as follows. Catalyzes the cross-linking of a glutamate residue and a tyrosine residue in the PqqA protein as part of the biosynthesis of pyrroloquinoline quinone (PQQ). The polypeptide is PqqA peptide cyclase (Rhizobium meliloti (strain 1021) (Ensifer meliloti)).